The primary structure comprises 168 residues: GTP-dependent dephospho-CoA kinase (168 aa).

Residues aspartate 49, valine 50, valine 51, aspartate 68, lysine 70, and glutamate 120 each coordinate GTP.

The protein belongs to the GTP-dependent DPCK family.

The catalysed reaction is 3'-dephospho-CoA + GTP = GDP + CoA + H(+). It participates in cofactor biosynthesis; coenzyme A biosynthesis. Functionally, catalyzes the GTP-dependent phosphorylation of the 3'-hydroxyl group of dephosphocoenzyme A to form coenzyme A (CoA). The sequence is that of GTP-dependent dephospho-CoA kinase from Pyrobaculum calidifontis (strain DSM 21063 / JCM 11548 / VA1).